Consider the following 67-residue polypeptide: MWRIWRLFDPMRAMVAQAVFLLGLAVLIHLMLLGTNKYNWLDGAKKAPAATAVAPVPAEVTSLAQAK.

Residue M1 is modified to N-formylmethionine; in strain DSM 149 and DSM 151. Residues M1–R12 lie on the Cytoplasmic side of the membrane. The chain crosses the membrane as a helical span at residues A13–L33. H29 contacts a bacteriochlorophyll. Over G34–K67 the chain is Periplasmic.

This sequence belongs to the antenna complex alpha subunit family. In terms of assembly, an alpha/beta heterodimer. The core complex is formed by different alpha and beta chains, binding bacteriochlorophyll molecules, and arranged most probably in tetrameric structures disposed around the reaction center. The non-pigmented gamma chains may constitute additional components. The N-terminus is blocked.

It is found in the cell inner membrane. Antenna complexes are light-harvesting systems, which transfer the excitation energy to the reaction centers. In Rubrivivax gelatinosus (Rhodocyclus gelatinosus), this protein is Light-harvesting protein B-870 alpha chain (pufA).